Reading from the N-terminus, the 858-residue chain is Ubiquitin carboxyl-terminal hydrolase 5 (858 aa).

A2 bears the N-acetylalanine mark. Residues 73 to 98 (LRRTRRPKEEDTSAGTGDPPRKKPTR) form a disordered region. K113 is covalently cross-linked (Glycyl lysine isopeptide (Lys-Gly) (interchain with G-Cter in SUMO)). S149 and S156 each carry phosphoserine. Residues 175–283 (QVSKHAFNLK…EHLSHFGIDM (109 aa)) form a UBP-type; degenerate zinc finger. C195 and C816 are oxidised to a cystine. 2 residues coordinate Zn(2+): C199 and C202. W209 lines the substrate pocket. Residue C219 participates in Zn(2+) binding. 221-224 (RRYF) provides a ligand contact to substrate. Residue H232 coordinates Zn(2+). The substrate site is built by Y259, Y261, and D264. The residue at position 292 (T292) is a Phosphothreonine. Residues 326-856 (TGIRNLGNSC…LGYIYFYQRV (531 aa)) enclose the USP domain. Catalysis depends on C335, which acts as the Nucleophile. Residue T623 is modified to Phosphothreonine. UBA domains follow at residues 654-695 (MLDE…VMSH) and 722-762 (PPPE…IFSH). Phosphoserine occurs at positions 779, 783, and 785. The Proton acceptor role is filled by H818.

It belongs to the peptidase C19 family. As to quaternary structure, homodimer. Interacts with TRIML1. Post-translationally, SUMOylated at Lys-113; SUMOylation affects the interaction with Cav3.2 channels. Ubiquitinated by SMURF1; leading to proteasomal degradation.

It is found in the cytoplasm. Its subcellular location is the stress granule. The protein resides in the nucleus. The enzyme catalyses Thiol-dependent hydrolysis of ester, thioester, amide, peptide and isopeptide bonds formed by the C-terminal Gly of ubiquitin (a 76-residue protein attached to proteins as an intracellular targeting signal).. In terms of biological role, deubiquitinating enzyme that participates in a wide range of cellular processes by specifically cleaving isopeptide bonds between ubiquitin and substrate proteins or ubiquitin itself. Affects thereby important cellular signaling pathways such as NF-kappa-B, Wnt/beta-catenin, and cytokine production by regulating ubiquitin-dependent protein degradation. Participates in the activation of the Wnt signaling pathway by promoting FOXM1 deubiquitination and stabilization that induces the recruitment of beta-catenin to Wnt target gene promoter. Regulates the assembly and disassembly of heat-induced stress granules by mediating the hydrolysis of unanchored ubiquitin chains. Promotes lipopolysaccharide-induced apoptosis and inflammatory response by stabilizing the TXNIP protein. Affects T-cell biology by stabilizing the inhibitory receptor on T-cells PDC1. Acts as a negative regulator of autophagy by regulating ULK1 at both protein and mRNA levels. Acts also as a negative regulator of type I interferon production by simultaneously removing both 'Lys-48'-linked unanchored and 'Lys-63'-linked anchored polyubiquitin chains on the transcription factor IRF3. Modulates the stability of DNA mismatch repair protein MLH1 and counteracts the effect of the ubiquitin ligase UBR4. Upon activation by insulin, it gets phosphorylated through mTORC1-mediated phosphorylation to enhance YTHDF1 stability by removing 'Lys-11'-linked polyubiquitination. May also deubiquitinate other substrates such as the calcium channel CACNA1H. The protein is Ubiquitin carboxyl-terminal hydrolase 5 (Usp5) of Mus musculus (Mouse).